Reading from the N-terminus, the 365-residue chain is Mitogen-activated protein kinase 13 (365 aa).

The region spanning 25 to 308 is the Protein kinase domain; it reads YVSPTHVGSG…AAQALTHPFF (284 aa). 31 to 39 serves as a coordination point for ATP; sequence VGSGAYGSV. Serine 47 is subject to Phosphoserine. Residue lysine 54 participates in ATP binding. Residue aspartate 150 is the Proton acceptor of the active site. Residue threonine 180 is modified to Phosphothreonine; by MAP2K3, MAP2K4, MAP2K6 and MAP2K7. A TXY motif is present at residues 180 to 182; it reads TGY. Position 182 is a phosphotyrosine; by MAP2K3, MAP2K4, MAP2K6 and MAP2K7 (tyrosine 182). A Phosphoserine modification is found at serine 350.

It belongs to the protein kinase superfamily. CMGC Ser/Thr protein kinase family. MAP kinase subfamily. In terms of assembly, interacts with MAPK8IP2. Requires Mg(2+) as cofactor. In terms of processing, dually phosphorylated on Thr-180 and Tyr-182 by MAP2K3/MKK3, MAP2K4/MKK4, MAP2K6/MKK6 and MAP2K7/MKK7, which activates the enzyme. Dephosphorylated by dual specificity phosphatase DUSP1. As to expression, expressed in testes, pancreas, small intestine, lung and kidney. Abundant in macrophages, also present in neutrophils, CD4+ T-cells, and endothelial cells.

It carries out the reaction L-seryl-[protein] + ATP = O-phospho-L-seryl-[protein] + ADP + H(+). It catalyses the reaction L-threonyl-[protein] + ATP = O-phospho-L-threonyl-[protein] + ADP + H(+). With respect to regulation, activated by phosphorylation on threonine and tyrosine by dual specificity kinases, MAP2K3/MKK3, MAP2K6/MKK6, MAP2K4/MKK4 and MAP2K7/MKK7. Activation by ultraviolet radiation, hyperosmotic shock, anisomycin or by TNF-alpha is mediated by MAP2K3/MKK3. Inhibited by dual specificity phosphatase DUSP1. Functionally, serine/threonine kinase which acts as an essential component of the MAP kinase signal transduction pathway. MAPK13 is one of the four p38 MAPKs which play an important role in the cascades of cellular responses evoked by extracellular stimuli such as pro-inflammatory cytokines or physical stress leading to direct activation of transcription factors such as ELK1 and ATF2. Accordingly, p38 MAPKs phosphorylate a broad range of proteins and it has been estimated that they may have approximately 200 to 300 substrates each. MAPK13 is one of the less studied p38 MAPK isoforms. Some of the targets are downstream kinases such as MAPKAPK2, which are activated through phosphorylation and further phosphorylate additional targets. Plays a role in the regulation of protein translation by phosphorylating and inactivating EEF2K. Involved in cytoskeletal remodeling through phosphorylation of MAPT and STMN1. Mediates UV irradiation induced up-regulation of the gene expression of CXCL14. Plays an important role in the regulation of epidermal keratinocyte differentiation, apoptosis and skin tumor development. Phosphorylates the transcriptional activator MYB in response to stress which leads to rapid MYB degradation via a proteasome-dependent pathway. MAPK13 also phosphorylates and down-regulates PRKD1 during regulation of insulin secretion in pancreatic beta cells. This Homo sapiens (Human) protein is Mitogen-activated protein kinase 13 (MAPK13).